A 98-amino-acid polypeptide reads, in one-letter code: Ribonuclease kappa (98 aa).

The next 2 helical transmembrane spans lie at 13 to 33 and 65 to 85; these read ACGIVLSAWGVIMLIMLGIFF and VSYNCFIAAGLYLLLGGFSFC.

Belongs to the RNase K family. Interacts with the proton translocation complex V0 of the V-ATPase. Interacts with ATP6AP1.

The protein resides in the endomembrane system. Its subcellular location is the cytoplasmic vesicle. It localises to the clathrin-coated vesicle membrane. In terms of biological role, endoribonuclease which preferentially cleaves ApU and ApG phosphodiester bonds. Hydrolyzes UpU bonds at a lower rate. Regulates the activity of vacuolar (H+)-ATPase (V-ATPase) which is responsible for acidifying and maintaining the pH of intracellular compartments. Required at an early stage of receptor-mediated endocytosis. This Mus musculus (Mouse) protein is Ribonuclease kappa (Rnasek).